The primary structure comprises 516 residues: Calcitonin receptor (516 aa).

The signal sequence occupies residues 1 to 24 (MRFLLLNRFTLLLLLLVSPTPVLQ). The Extracellular segment spans residues 25 to 146 (APTNLTDSGL…FTPDKLHNAY (122 aa)). N-linked (GlcNAc...) asparagine glycans are attached at residues N28, N73, N125, and N130. 3 cysteine pairs are disulfide-bonded: C55–C81, C72–C112, and C95–C134. Residues 147-169 (VLYYLALVGHSMSIAALIASMGI) form a helical membrane-spanning segment. Topologically, residues 170-181 (FLFFKNLSCQRV) are cytoplasmic. The helical transmembrane segment at 182–202 (TLHKNMFLTYILNSIIIIIHL) threads the bilayer. The Extracellular segment spans residues 203–256 (VEVVPNGDLVRRDPMHIFHHNTYMWTMQWELSPPLPLSAHEGKMDPHDSEVISC). C256 and C326 form a disulfide bridge. The chain crosses the membrane as a helical span at residues 257–279 (KILHFFHQYMMACNYFWMLCEGI). The Cytoplasmic portion of the chain corresponds to 280-296 (YLHTLIVMAVFTEDQRL). A helical transmembrane segment spans residues 297-317 (RWYYLLGWGFPIVPTIIHAIT). Over 318-333 (RAVYYNDNCWLSTETH) the chain is Extracellular. Residues 334–357 (LLYIIHGPVMAALVVNFFFLLNIV) traverse the membrane as a helical segment. Residues 358–377 (RVLVTKMRQTHEAEAYMYLK) lie on the Cytoplasmic side of the membrane. The helical transmembrane segment at 378–396 (AVKATMVLVPLLGIQFVVF) threads the bilayer. Residues 397 to 404 (PWRPSNKV) are Extracellular-facing. The helical transmembrane segment at 405 to 431 (LGKIYDYLMHSLIHFQGFFVATIYCFC) threads the bilayer. Residues 432–516 (NHEVQVTLKR…MNVIQQDSSA (85 aa)) lie on the Cytoplasmic side of the membrane. The segment at 489-516 (RNPPVSNNEGEEGTEMIPMNVIQQDSSA) is disordered.

This sequence belongs to the G-protein coupled receptor 2 family. As to quaternary structure, heterodimer of CALCR and RAMP1, RAMP2 or RAMP3; the receptor complexes function as AMYR1, AMYR2 and AMYR3 receptors, respectively, and respond to amylin/IAPP, calcitonin/CT and CGRP1 ligands. Interacts with GPRASP2.

The protein resides in the cell membrane. Functionally, g protein-coupled receptor activated by ligand peptides amylin (IAPP), calcitonin (CT/CALCA) and calcitonin gene-related peptide type 1 (CGRP1/CALCA). CALCR interacts with receptor-activity-modifying proteins RAMP1, 2 and 3 to form receptor complexes AMYR1, 2 and 3, respectively. IAPP, CT and CGRP1 activate CALCR and AMYRs with distinct modes of receptor activation resulting in specific phenotypes. Ligand binding causes a conformation change that triggers signaling via guanine nucleotide-binding proteins (G proteins) and modulates the activity of downstream effectors. Activates cAMP-dependent pathway. In Rattus norvegicus (Rat), this protein is Calcitonin receptor.